Reading from the N-terminus, the 325-residue chain is dITP/XTP pyrophosphatase (325 aa).

The segment at 1–128 is unknown; sequence MKEKIYEYKD…KKVSELGDTI (128 aa). Positions 129-324 are NTP pyrophosphatase; that stretch reads LIATRNEGKT…MEVFPAWQNA (196 aa). Residue 132–137 participates in substrate binding; sequence TRNEGK. 2 residues coordinate Mg(2+): Glu-165 and Asp-194. The Proton acceptor role is filled by Asp-194. Substrate-binding positions include Ser-195, 278–281, Lys-301, and 306–307; these read FGYD and HR.

The protein belongs to the HAM1 NTPase family. Homodimer. It depends on Mg(2+) as a cofactor.

It catalyses the reaction XTP + H2O = XMP + diphosphate + H(+). The catalysed reaction is dITP + H2O = dIMP + diphosphate + H(+). The enzyme catalyses ITP + H2O = IMP + diphosphate + H(+). Its function is as follows. Pyrophosphatase that catalyzes the hydrolysis of nucleoside triphosphates to their monophosphate derivatives, with a high preference for the non-canonical purine nucleotides XTP (xanthosine triphosphate), dITP (deoxyinosine triphosphate) and ITP. Seems to function as a house-cleaning enzyme that removes non-canonical purine nucleotides from the nucleotide pool, thus preventing their incorporation into DNA/RNA and avoiding chromosomal lesions. The sequence is that of dITP/XTP pyrophosphatase from Streptococcus mutans serotype c (strain ATCC 700610 / UA159).